The sequence spans 458 residues: UDP-N-acetylmuramate--L-alanine ligase (458 aa).

112–118 (GTHGKTT) is a binding site for ATP.

It belongs to the MurCDEF family.

It is found in the cytoplasm. The enzyme catalyses UDP-N-acetyl-alpha-D-muramate + L-alanine + ATP = UDP-N-acetyl-alpha-D-muramoyl-L-alanine + ADP + phosphate + H(+). The protein operates within cell wall biogenesis; peptidoglycan biosynthesis. Cell wall formation. This Geotalea uraniireducens (strain Rf4) (Geobacter uraniireducens) protein is UDP-N-acetylmuramate--L-alanine ligase.